Reading from the N-terminus, the 130-residue chain is Vascular-related unknown protein 3 (130 aa).

Residues 45–81 (DDSSMMSDAASPMGCVEEDTASSPSNRTEGYSGMEDN) form a disordered region.

Involved in the regulation of plant growth. This is Vascular-related unknown protein 3 from Arabidopsis thaliana (Mouse-ear cress).